The following is a 274-amino-acid chain: Shikimate dehydrogenase (NADP(+)) (274 aa).

Residues 14-16 and Thr-61 contribute to the shikimate site; that span reads SKS. Lys-65 serves as the catalytic Proton acceptor. Residues Asn-86 and Asp-102 each coordinate shikimate. NADP(+)-binding positions include 126–130, 150–155, and Met-214; these read GAGGA and NRTAEK. Tyr-216 contacts shikimate. Gly-239 provides a ligand contact to NADP(+).

It belongs to the shikimate dehydrogenase family. As to quaternary structure, homodimer.

The enzyme catalyses shikimate + NADP(+) = 3-dehydroshikimate + NADPH + H(+). It participates in metabolic intermediate biosynthesis; chorismate biosynthesis; chorismate from D-erythrose 4-phosphate and phosphoenolpyruvate: step 4/7. Its function is as follows. Involved in the biosynthesis of the chorismate, which leads to the biosynthesis of aromatic amino acids. Catalyzes the reversible NADPH linked reduction of 3-dehydroshikimate (DHSA) to yield shikimate (SA). The sequence is that of Shikimate dehydrogenase (NADP(+)) from Pseudoalteromonas translucida (strain TAC 125).